Here is a 510-residue protein sequence, read N- to C-terminus: Probable cytosol aminopeptidase (510 aa).

Mn(2+) contacts are provided by Lys282 and Asp287. Lys294 is a catalytic residue. Asp305, Asp364, and Glu366 together coordinate Mn(2+). The active site involves Arg368.

Belongs to the peptidase M17 family. It depends on Mn(2+) as a cofactor.

It is found in the cytoplasm. It catalyses the reaction Release of an N-terminal amino acid, Xaa-|-Yaa-, in which Xaa is preferably Leu, but may be other amino acids including Pro although not Arg or Lys, and Yaa may be Pro. Amino acid amides and methyl esters are also readily hydrolyzed, but rates on arylamides are exceedingly low.. The catalysed reaction is Release of an N-terminal amino acid, preferentially leucine, but not glutamic or aspartic acids.. Functionally, presumably involved in the processing and regular turnover of intracellular proteins. Catalyzes the removal of unsubstituted N-terminal amino acids from various peptides. The protein is Probable cytosol aminopeptidase of Cupriavidus metallidurans (strain ATCC 43123 / DSM 2839 / NBRC 102507 / CH34) (Ralstonia metallidurans).